A 225-amino-acid polypeptide reads, in one-letter code: Orotate phosphoribosyltransferase (225 aa).

Lys-29 serves as a coordination point for 5-phospho-alpha-D-ribose 1-diphosphate. 37-38 (FF) contributes to the orotate binding site. Residues 75-76 (YK), Arg-105, Lys-106, Lys-109, His-111, and 130-138 (DDVITAGTS) contribute to the 5-phospho-alpha-D-ribose 1-diphosphate site. Residues Thr-134 and Arg-162 each coordinate orotate.

It belongs to the purine/pyrimidine phosphoribosyltransferase family. PyrE subfamily. Homodimer. Mg(2+) serves as cofactor.

The catalysed reaction is orotidine 5'-phosphate + diphosphate = orotate + 5-phospho-alpha-D-ribose 1-diphosphate. The protein operates within pyrimidine metabolism; UMP biosynthesis via de novo pathway; UMP from orotate: step 1/2. Its function is as follows. Catalyzes the transfer of a ribosyl phosphate group from 5-phosphoribose 1-diphosphate to orotate, leading to the formation of orotidine monophosphate (OMP). In Bordetella petrii (strain ATCC BAA-461 / DSM 12804 / CCUG 43448), this protein is Orotate phosphoribosyltransferase.